The following is a 476-amino-acid chain: Argininosuccinate lyase (476 aa).

This sequence belongs to the lyase 1 family. Argininosuccinate lyase subfamily.

It is found in the cytoplasm. The catalysed reaction is 2-(N(omega)-L-arginino)succinate = fumarate + L-arginine. Its pathway is amino-acid biosynthesis; L-arginine biosynthesis; L-arginine from L-ornithine and carbamoyl phosphate: step 3/3. This chain is Argininosuccinate lyase, found in Nitrosospira multiformis (strain ATCC 25196 / NCIMB 11849 / C 71).